The sequence spans 184 residues: Shikimate kinase (184 aa).

Position 12–17 (12–17 (GSGKST)) interacts with ATP. Mg(2+) is bound at residue S16. Substrate contacts are provided by D34, R58, and G80. Residue R117 participates in ATP binding. R136 is a binding site for substrate. Residue R153 participates in ATP binding. The disordered stretch occupies residues 164-184 (SRLDDPTPNTSPSSTASGAAT). Over residues 169-184 (PTPNTSPSSTASGAAT) the composition is skewed to low complexity.

Belongs to the shikimate kinase family. In terms of assembly, monomer. Requires Mg(2+) as cofactor.

Its subcellular location is the cytoplasm. It catalyses the reaction shikimate + ATP = 3-phosphoshikimate + ADP + H(+). The protein operates within metabolic intermediate biosynthesis; chorismate biosynthesis; chorismate from D-erythrose 4-phosphate and phosphoenolpyruvate: step 5/7. Functionally, catalyzes the specific phosphorylation of the 3-hydroxyl group of shikimic acid using ATP as a cosubstrate. In Mycobacterium ulcerans (strain Agy99), this protein is Shikimate kinase.